The chain runs to 140 residues: MGEPRSQPPVERPPTAETFLPLSRVRTIMKSSMDTGLITNEVLFLMTKCTELFVRHLAGAAYTEEFGQRPGEALKYEHLSQVVNKNKNLEFLLQIVPQKIRVHQFQEMLRLNRSAGSDDDDDDDDDDDEEESESESESDE.

The interval 111–140 (LNRSAGSDDDDDDDDDDDEEESESESESDE) is disordered. The segment covering 117–140 (SDDDDDDDDDDDEEESESESESDE) has biased composition (acidic residues).

As to quaternary structure, component of the chromatin accessibility complex (CHRAC), composed of Chrac-14, Chrac-16, Acf and Iswi. Forms a heterodimer with Chrac-14. The Chrac-14/Chrac-16 heterodimer interacts with Acf (via N-terminus). Stabilizes the interaction between Chrac-14 and Iswi.

The protein localises to the nucleus. Functionally, histone-like protein which promotes nucleosome sliding of ATP-dependent nucleosome remodeling complexes. Part of the chromatin-accessibility complex (CHRAC) which uses energy/ATP to increase the general accessibility of DNA in chromatin. As a heterodimer with Chrac-14, binds DNA and facilitates nucleosome sliding by Acf. As part of the CHRAC complex, required for oogenesis. The polypeptide is Chromatin accessibility complex 16kD protein (Drosophila melanogaster (Fruit fly)).